The chain runs to 408 residues: Mitochondrial outer membrane protein SLC25A46 (408 aa).

Disordered regions lie at residues 1-23 (MHPR…EEPC) and 52-80 (HWGE…LGAG). Residues 66–76 (LGAAGLNEEPG) show a composition bias toward low complexity. A Solcar 1 repeat occupies 86–177 (QLNRFAGFGI…GIISEFTPLP (92 aa)). A run of 6 helical transmembrane segments spans residues 93–113 (FGIG…CIVL), 157–177 (FIVQ…TPLP), 189–209 (IGGH…FYSA), 248–268 (LLPL…HYVI), 304–324 (FPEL…LYPL), and 373–393 (LGFY…VAVL). One copy of the Solcar 2 repeat lies at 301–403 (DAYFPELIAS…QLTKIIYSTL (103 aa)).

Belongs to the mitochondrial carrier (TC 2.A.29) family.

Its subcellular location is the mitochondrion outer membrane. In terms of biological role, transmembrane protein of the mitochondrial outer membrane that controls mitochondrial organization. May regulate the assembly of the MICOS (mitochondrial contact site and cristae organizing system) complex which is essential to the biogenesis and dynamics of mitochondrial cristae, the inwards folds of the inner mitochondrial membrane. Through its interaction with the EMC (endoplasmic reticulum membrane protein complex), could regulate mitochondrial lipid homeostasis and thereby mitochondrial fission. The polypeptide is Mitochondrial outer membrane protein SLC25A46 (Gallus gallus (Chicken)).